The sequence spans 455 residues: Acid sphingomyelinase-like phosphodiesterase 3b (455 aa).

The signal sequence occupies residues 1–18 (MRLLAWLIFLANWGGARA). The Zn(2+) site is built by Asp-28 and His-30. Cysteines 45 and 64 form a disulfide. Asn-72 carries an N-linked (GlcNAc...) asparagine glycan. 2 residues coordinate Zn(2+): Asp-93 and Asn-134. Asn-164 carries an N-linked (GlcNAc...) asparagine glycan. Zn(2+)-binding residues include His-236, His-277, and His-279. A glycan (N-linked (GlcNAc...) asparagine) is linked at Asn-343. Cystine bridges form between Cys-405/Cys-409 and Cys-415/Cys-428.

The protein belongs to the acid sphingomyelinase family. Interacts with TLR4, TLR7, TLR8 and TLR9. Zn(2+) serves as cofactor. In terms of processing, N-glycosylated.

The protein localises to the secreted. Its subcellular location is the cell membrane. In terms of biological role, lipid-modulating phosphodiesterase. Active on the surface of macrophages and dendritic cells and strongly influences macrophage lipid composition and membrane fluidity. Acts as a negative regulator of Toll-like receptor signaling. Has in vitro phosphodiesterase activity, but the physiological substrate is unknown. Lacks activity with phosphocholine-containing lipids, but can cleave CDP-choline, and can release phosphate from ATP and ADP (in vitro). The protein is Acid sphingomyelinase-like phosphodiesterase 3b (SMPDL3B) of Homo sapiens (Human).